Consider the following 220-residue polypeptide: Probable chemoreceptor glutamine deamidase CheD (220 aa).

Belongs to the CheD family.

The catalysed reaction is L-glutaminyl-[protein] + H2O = L-glutamyl-[protein] + NH4(+). Its function is as follows. Probably deamidates glutamine residues to glutamate on methyl-accepting chemotaxis receptors (MCPs), playing an important role in chemotaxis. The protein is Probable chemoreceptor glutamine deamidase CheD of Cupriavidus metallidurans (strain ATCC 43123 / DSM 2839 / NBRC 102507 / CH34) (Ralstonia metallidurans).